Here is an 883-residue protein sequence, read N- to C-terminus: Translation initiation factor IF-2 (883 aa).

Disordered regions lie at residues 1 to 96 (MVDT…RSGM) and 132 to 259 (QRRA…RGRL). The segment covering 57–66 (PAEPAAAAPE) has biased composition (low complexity). The segment covering 72–87 (TPAPPAVSPRQQPRPS) has biased composition (pro residues). Positions 132–188 (QRRAAQELVDKAEREAAEVRRKAEEERHRHEEETKRKAETEAKKRFGEAEPAKKPAD) are enriched in basic and acidic residues. Low complexity predominate over residues 191 to 217 (PASTSTTTTAPRAPVTTTTRPPAVAAE). The region spanning 380 to 551 (PRSPVVTVMG…ALQAELLDLK (172 aa)) is the tr-type G domain. The G1 stretch occupies residues 389–396 (GHVDHGKT). Residue 389 to 396 (GHVDHGKT) participates in GTP binding. A G2 region spans residues 414-418 (GITQH). A G3 region spans residues 437–440 (DTPG). GTP contacts are provided by residues 437–441 (DTPGH) and 491–494 (NKID). The tract at residues 491-494 (NKID) is G4. Positions 527 to 529 (SAK) are G5.

This sequence belongs to the TRAFAC class translation factor GTPase superfamily. Classic translation factor GTPase family. IF-2 subfamily.

It is found in the cytoplasm. Functionally, one of the essential components for the initiation of protein synthesis. Protects formylmethionyl-tRNA from spontaneous hydrolysis and promotes its binding to the 30S ribosomal subunits. Also involved in the hydrolysis of GTP during the formation of the 70S ribosomal complex. The sequence is that of Translation initiation factor IF-2 from Rhodopseudomonas palustris (strain BisB5).